Consider the following 876-residue polypeptide: Leucine--tRNA ligase (876 aa).

Residues 43–53 carry the 'HIGH' region motif; it reads PYPSGRIHMGH. The 'KMSKS' region motif lies at 632–636; the sequence is KMSKS. K635 provides a ligand contact to ATP.

This sequence belongs to the class-I aminoacyl-tRNA synthetase family.

The protein localises to the cytoplasm. The catalysed reaction is tRNA(Leu) + L-leucine + ATP = L-leucyl-tRNA(Leu) + AMP + diphosphate. The polypeptide is Leucine--tRNA ligase (Rhizobium etli (strain ATCC 51251 / DSM 11541 / JCM 21823 / NBRC 15573 / CFN 42)).